The sequence spans 1178 residues: Pesticidal crystal protein Cry1Ac (1178 aa).

It belongs to the delta endotoxin family.

Functionally, promotes colloidosmotic lysis by binding to the midgut epithelial cells of many lepidopteran larvae. This chain is Pesticidal crystal protein Cry1Ac (cry1Ac), found in Bacillus thuringiensis subsp. kurstaki.